The following is a 250-amino-acid chain: Protein lin-28 homolog B (250 aa).

The disordered stretch occupies residues 1–26 (MAEGGASKGGGEEPGKLPEPAEEESQ). One can recognise a CSD domain in the interval 29-102 (RGTGHCKWFN…GLESIRVTGP (74 aa)). Ser-54, Ser-96, Ser-105, and Ser-110 each carry phosphoserine. The disordered stretch occupies residues 98–126 (RVTGPGGSPCLGSERRPKGKTLQKRKPKG). Residues 112–125 (RRPKGKTLQKRKPK) carry the Bipartite nuclear localization signal motif. Basic residues predominate over residues 114–125 (PKGKTLQKRKPK). 2 CCHC-type zinc fingers span residues 127 to 144 (DRCY…ECSL) and 149 to 166 (KKCH…NCPH). Cys-129, Cys-132, His-137, Cys-142, Cys-151, Cys-154, His-159, and Cys-164 together coordinate Zn(2+). The interval 169-250 (VAQPPASSQG…GPSVQKRKKT (82 aa)) is disordered. Polar residues predominate over residues 173-191 (PASSQGRQEAESQPCTSTL). Ser-203 carries the phosphoserine modification. A compositionally biased stretch (basic and acidic residues) spans 210–219 (ARAEISERSG). Positions 220–231 (RSPQEASSTKSS) are enriched in polar residues. Residues 239–250 (KKGPSVQKRKKT) carry the Nucleolar localization signal motif.

Belongs to the lin-28 family. In terms of tissue distribution, expressed at high levels in the placenta and, at mucher lower, in testis and fetal liver. Isoform 1 is only detected in placenta and in moderately and poorly differentiated hepatocellular carcinoma cells (at protein level). Isoform 2 is detected in fetal liver, non-tumor liver tissues, as well as well-differentiated tumor tissues (at protein level). Tends to be up-regulated in triple-negative (ER-,PR-,HER2-) breast tumors, as well as in liver, ovarian, and thyroid carcinomas.

The protein resides in the nucleus. It localises to the nucleolus. It is found in the cytoplasm. Functionally, suppressor of microRNA (miRNA) biogenesis, including that of let-7 and possibly of miR107, miR-143 and miR-200c. Binds primary let-7 transcripts (pri-let-7), including pri-let-7g and pri-let-7a-1, and sequester them in the nucleolus, away from the microprocessor complex, hence preventing their processing into mature miRNA. Does not act on pri-miR21. The repression of let-7 expression is required for normal development and contributes to maintain the pluripotent state of embryonic stem cells by preventing let-7-mediated differentiation. When overexpressed, recruits ZCCHC11/TUT4 uridylyltransferase to pre-let-7 transcripts, leading to their terminal uridylation and degradation. This activity might not be relevant in vivo, as LIN28B-mediated inhibition of let-7 miRNA maturation appears to be ZCCHC11-independent. Interaction with target pre-miRNAs occurs via an 5'-GGAG-3' motif in the pre-miRNA terminal loop. Mediates MYC-induced let-7 repression. When overexpressed, isoform 1 stimulates growth of the breast adenocarcinoma cell line MCF-7. Isoform 2 has no effect on cell growth. The chain is Protein lin-28 homolog B (LIN28B) from Homo sapiens (Human).